A 619-amino-acid chain; its full sequence is Dihydroxy-acid dehydratase (619 aa).

A Mg(2+)-binding site is contributed by Asp81. Cys122 is a [2Fe-2S] cluster binding site. Asp123 and Lys124 together coordinate Mg(2+). Lys124 carries the post-translational modification N6-carboxylysine. [2Fe-2S] cluster is bound at residue Cys195. A Mg(2+)-binding site is contributed by Glu494. Catalysis depends on Ser520, which acts as the Proton acceptor.

It belongs to the IlvD/Edd family. As to quaternary structure, homodimer. [2Fe-2S] cluster is required as a cofactor. It depends on Mg(2+) as a cofactor.

It carries out the reaction (2R)-2,3-dihydroxy-3-methylbutanoate = 3-methyl-2-oxobutanoate + H2O. The catalysed reaction is (2R,3R)-2,3-dihydroxy-3-methylpentanoate = (S)-3-methyl-2-oxopentanoate + H2O. It participates in amino-acid biosynthesis; L-isoleucine biosynthesis; L-isoleucine from 2-oxobutanoate: step 3/4. It functions in the pathway amino-acid biosynthesis; L-valine biosynthesis; L-valine from pyruvate: step 3/4. Functions in the biosynthesis of branched-chain amino acids. Catalyzes the dehydration of (2R,3R)-2,3-dihydroxy-3-methylpentanoate (2,3-dihydroxy-3-methylvalerate) into 2-oxo-3-methylpentanoate (2-oxo-3-methylvalerate) and of (2R)-2,3-dihydroxy-3-methylbutanoate (2,3-dihydroxyisovalerate) into 2-oxo-3-methylbutanoate (2-oxoisovalerate), the penultimate precursor to L-isoleucine and L-valine, respectively. This is Dihydroxy-acid dehydratase from Shewanella frigidimarina (strain NCIMB 400).